The chain runs to 336 residues: MRILVTGGAGFIGSEFVRATLRGTLPGSSGTQVTVLDKLTYSGNVLNLAPIADLRNYRFVRGDICDQDLVDDVVAGHDAIVHFAAETHVDRSIGSAASFVRTNAMGTQVLLEAASRHRLGRFVHISTDEVYGSIPEGAWDEESPVAPNAPYAAAKAAGDLLALAWHRTHGLDVVVTRCTNNYGPYQYPEKLIPLFTTNVMDGQQVPVYGEGHNRRQWLHVSDHCRAIQLVLLGGRAGEVYHIGGGTELTNLELAEQILKSCGAGWDMVRHVPDRPGHDFRYSLDTTKIRTELGFSPRVAFADGLVETVEWYRDNRAWWEPLKSPDEATGSPGDAGR.

Residues 7 to 13 (GGAGFIG), 37 to 40 (DKLT), and 63 to 64 (DI) each bind NAD(+). Residue Thr-87 participates in substrate binding. NAD(+) is bound at residue Thr-102. Residue 127 to 129 (TDE) participates in substrate binding. Asp-128 (proton donor) is an active-site residue. Residues Glu-129 and Tyr-151 each act as proton acceptor in the active site. An NAD(+)-binding site is contributed by 151 to 155 (YAAAK). Residue Asn-180 coordinates substrate. Asn-181 contributes to the NAD(+) binding site. Substrate contacts are provided by residues 190-191 (KL), 206-208 (PVY), Arg-215, Asn-250, and 274-277 (RPGH).

It belongs to the NAD(P)-dependent epimerase/dehydratase family. dTDP-glucose dehydratase subfamily. As to quaternary structure, homodimer. The cofactor is NAD(+).

It catalyses the reaction dTDP-alpha-D-glucose = dTDP-4-dehydro-6-deoxy-alpha-D-glucose + H2O. It functions in the pathway antibiotic biosynthesis; novobiocin biosynthesis. Functionally, dTDP-glucose 4,6-dehydratase involved in the generation of the deoxysugar in the novobiocin biosynthesis pathway, an aminocoumarin family antibiotic that targets bacterial DNA gyrases. This chain is dTDP-glucose 4,6-dehydratase (novT), found in Streptomyces niveus (Streptomyces spheroides).